The primary structure comprises 147 residues: Small ribosomal subunit protein bS6 (147 aa).

The interval 96–147 is disordered; that stretch reads VTEPSPMMKAKEERFTKRDDREERSDRSEAPRAEAPAKAEAPAKAEDEAAAE. Residues 104 to 147 show a composition bias toward basic and acidic residues; it reads KAKEERFTKRDDREERSDRSEAPRAEAPAKAEAPAKAEDEAAAE.

It belongs to the bacterial ribosomal protein bS6 family.

In terms of biological role, binds together with bS18 to 16S ribosomal RNA. The polypeptide is Small ribosomal subunit protein bS6 (Photobacterium profundum (strain SS9)).